We begin with the raw amino-acid sequence, 576 residues long: uncharacterized protein (576 aa).

The signal sequence occupies residues 1-28 (MLRLNGLRVLLRTLAAIGALLTTASASA). Serine 185 serves as the catalytic Acyl-ester intermediate. 2 disulfide bridges follow: cysteine 252–cysteine 269 and cysteine 278–cysteine 286. 4 residues coordinate Ca(2+): aspartate 253, aspartate 256, aspartate 260, and valine 262. Catalysis depends on charge relay system residues aspartate 414 and histidine 464. A disulfide bridge links cysteine 529 with cysteine 551.

This sequence belongs to the tannase family.

This is an uncharacterized protein from Xanthomonas campestris pv. campestris (strain ATCC 33913 / DSM 3586 / NCPPB 528 / LMG 568 / P 25).